We begin with the raw amino-acid sequence, 917 residues long: Smoothelin (917 aa).

Alanine 2 bears the N-acetylalanine mark. The stretch at 24 to 89 (LAERRRIRSA…ARLAGQLESM (66 aa)) forms a coiled coil. Residues 157 to 456 (EVPEREEQEQ…AVGTAEPGGS (300 aa)) are disordered. The span at 177 to 188 (PEGTSQDVTTVT) shows a compositional bias: polar residues. Low complexity-rich tracts occupy residues 193–210 (APPGSTSSSPASPSSSPT) and 220–232 (PAEAQCLTAEVPG). The span at 233–243 (SPEPPPSPPKT) shows a compositional bias: pro residues. Over residues 244 to 258 (TSPEPQESPTLPSTE) the composition is skewed to low complexity. Residues 298 to 326 (RSLSVLSPRQPAQNRESTPLASGPSSFQR) show a composition bias toward polar residues. Serine 299, serine 301, and serine 304 each carry phosphoserine. Basic and acidic residues predominate over residues 329-338 (SVRDRVHKFT). Serine 341 bears the Phosphoserine mark. Threonine 351 carries the phosphothreonine modification. A Phosphoserine modification is found at serine 357. Residues threonine 360 and threonine 373 each carry the phosphothreonine modification. Positions 363–392 (RLLGPSLTSTTPASSSSGSSSRGPSDTSSR) are enriched in low complexity. A phosphoserine mark is found at serine 503, serine 514, serine 523, and serine 576. 2 disordered regions span residues 560-580 (ANGAEQTRVNKAPEGRSPLSA) and 617-767 (QRKR…RKAM). The stretch at 603 to 630 (EERKLIRAALRELRQRKRDQRDKERERR) forms a coiled coil. The span at 617–640 (QRKRDQRDKERERRLQEARGRPGE) shows a compositional bias: basic and acidic residues. Over residues 676–689 (NDGTRTARTTTVES) the composition is skewed to polar residues. A compositionally biased stretch (low complexity) spans 701–720 (STMMQTKTFSSSSSSKKMGS). Serine 729 carries the phosphoserine modification. The span at 738–750 (LEKRQAEKKKELM) shows a compositional bias: basic and acidic residues. At serine 792 the chain carries Phosphoserine. The Calponin-homology (CH) domain maps to 799 to 906 (NSIKQMLLDW…YVQSLYNHLR (108 aa)).

This sequence belongs to the smoothelin family. In terms of tissue distribution, smooth muscle; contractile or vascular (for the long form).

It is found in the cytoplasm. The protein resides in the cytoskeleton. Functionally, structural protein of the cytoskeleton. This Homo sapiens (Human) protein is Smoothelin (SMTN).